We begin with the raw amino-acid sequence, 337 residues long: 2-oxoglutarate-dependent ethylene/succinate-forming enzyme (337 aa).

Positions 166-286 (GWHHMRVLRF…RFACAYFHEP (121 aa)) constitute a Fe2OG dioxygenase domain. Fe cation is bound by residues His189 and His268.

The protein belongs to the iron/ascorbate-dependent oxidoreductase family. Monomer. It depends on Fe(2+) as a cofactor.

The enzyme catalyses 2-oxoglutarate + O2 + 2 H(+) = ethene + 3 CO2 + H2O. The catalysed reaction is L-arginine + 2-oxoglutarate + O2 = guanidine + L-glutamate 5-semialdehyde + succinate + CO2. The protein operates within alkene biosynthesis; ethylene biosynthesis via 2-oxoglutarate. In terms of biological role, simultaneously catalyzes two reactions, namely formation of ethylene and of succinate from 2-oxoglutarate. This chain is 2-oxoglutarate-dependent ethylene/succinate-forming enzyme (efe), found in Pseudomonas syringae pv. pisi.